The primary structure comprises 253 residues: Large ribosomal subunit protein uL4 (253 aa).

The protein belongs to the universal ribosomal protein uL4 family. Part of the 50S ribosomal subunit.

Its function is as follows. One of the primary rRNA binding proteins, this protein initially binds near the 5'-end of the 23S rRNA. It is important during the early stages of 50S assembly. It makes multiple contacts with different domains of the 23S rRNA in the assembled 50S subunit and ribosome. In terms of biological role, forms part of the polypeptide exit tunnel. This is Large ribosomal subunit protein uL4 from Methanococcoides burtonii (strain DSM 6242 / NBRC 107633 / OCM 468 / ACE-M).